Reading from the N-terminus, the 647-residue chain is MEHIQGAWKTISNGFGLKDSVFDGPNCISPTIVQQFGYQRRASDDGKISDTSKTSNTIRVFLPNKQRTVVNVRNGMTLHDCLMKALKVRGLQPECCAVFRLVTEPKGKKVRLDWNTDAASLIGEELQVDFLDHVPLTTHNFARKTFLKLAFCDICQKFLLNGFRCQTCGYKFHEHCSTKVPTMCVDWSNIRQLLLFPNSNISDSGVPALPPLTMRRMRESVSRIPVSSQHRYSTPHVFTFNTSNPSSEGTLSQRQRSTSTPNVHMVSTTMPVDSRIIEDAIRNHSESASPSALSGSPNNMSPTGWSQPKTPVPAQRERAPGTNTQEKNKIRPRGQRDSSYYWEIEASEVMLSTRIGSGSFGTVYKGKWHGDVAVKILKVVDPTPEQFQAFRNEVAVLRKTRHVNILLFMGYMTKDNLAIVTQWCEGSSLYKHLHVQETKFQMFQLIDIARQTAQGMDYLHAKNIIHRDMKSNNIFLHEGLTVKIGDFGLATVKSRWSGSQQVEQPTGSILWMAPEVIRMQDSNPFSFQSDVYSYGIVLYELMTGELPYSHINNRDQIIFMVGRGYASPDLSKLYKNCPKAMKRLVADCLKKVREERPLFPQILSSIELLQHSLPKINRSASEPSLHRASHTEDINSCTLTSTRLPVF.

Phosphoserine is present on Ser-43. The region spanning 56–131 (NTIRVFLPNK…IGEELQVDFL (76 aa)) is the RBD domain. Residues 138 to 184 (THNFARKTFLKLAFCDICQKFLLNGFRCQTCGYKFHEHCSTKVPTMC) form a Phorbol-ester/DAG-type zinc finger. 2 disordered regions span residues 236-269 (HVFTFNTSNPSSEGTLSQRQRSTSTPNVHMVSTT) and 284-334 (HSES…RPRG). A compositionally biased stretch (polar residues) spans 239 to 269 (TFNTSNPSSEGTLSQRQRSTSTPNVHMVSTT). A Phosphoserine modification is found at Ser-259. Residue Thr-268 is modified to Phosphothreonine; by autocatalysis. A compositionally biased stretch (low complexity) spans 286 to 297 (ESASPSALSGSP). The span at 298–309 (NNMSPTGWSQPK) shows a compositional bias: polar residues. Ser-338 carries the post-translational modification Phosphoserine. Positions 349-609 (VMLSTRIGSG…PQILSSIELL (261 aa)) constitute a Protein kinase domain. ATP-binding positions include 355-363 (IGSGSFGTV) and Lys-375. The active-site Proton acceptor is Asp-468. Phosphoserine is present on residues Ser-499 and Ser-621.

The protein belongs to the protein kinase superfamily. TKL Ser/Thr protein kinase family. RAF subfamily. Post-translationally, phosphorylation at Ser-259 inactivates kinase activity. Dephosphorylation of Ser-259 by a complex containing protein phosphatase 1 relieves inactivation, leading to stimulate RAF1 activity. In terms of tissue distribution, isoform 1 was present in all tissues tested: skeletal muscle, intestine, brain, gizzard, heart, lung, kidney, bone marrow, spleen and bursa of Fabricius. Isoform 2 was only detected in brain, heart and skeletal muscle. In brain and heart isoform 1 is more abundant than isoform 2. In skeletal muscle isoform 2 is more abundant than isoform 1.

It localises to the cytoplasm. The protein resides in the cell membrane. The enzyme catalyses L-seryl-[protein] + ATP = O-phospho-L-seryl-[protein] + ADP + H(+). The catalysed reaction is L-threonyl-[protein] + ATP = O-phospho-L-threonyl-[protein] + ADP + H(+). Serine/threonine-protein kinase that acts as a regulatory link between the membrane-associated Ras GTPases and the MAPK/ERK cascade, and this critical regulatory link functions as a switch determining cell fate decisions. RAF1 activation initiates a mitogen-activated protein kinase (MAPK) cascade that comprises a sequential phosphorylation of the dual-specific MAPK kinases (MAP2K1/MEK1 and MAP2K2/MEK2) and the extracellular signal-regulated kinases (MAPK3/ERK1 and MAPK1/ERK2). This chain is RAF proto-oncogene serine/threonine-protein kinase (RAF1), found in Gallus gallus (Chicken).